The primary structure comprises 331 residues: Putative NAD(P)H nitroreductase acg (331 aa).

Residues 28-32 (QPWRW) and Arg316 contribute to the FMN site.

This sequence belongs to the nitroreductase family. Requires FMN as cofactor.

The polypeptide is Putative NAD(P)H nitroreductase acg (acg) (Mycobacterium tuberculosis (strain CDC 1551 / Oshkosh)).